Reading from the N-terminus, the 256-residue chain is Phosphate import ATP-binding protein PstB (256 aa).

Residues 10 to 251 (IRTVNVNFYY…PEQKQTEDYI (242 aa)) enclose the ABC transporter domain. 42-49 (GPSGCGKS) is an ATP binding site.

This sequence belongs to the ABC transporter superfamily. Phosphate importer (TC 3.A.1.7) family. In terms of assembly, the complex is composed of two ATP-binding proteins (PstB), two transmembrane proteins (PstC and PstA) and a solute-binding protein (PstS).

It is found in the cell inner membrane. The enzyme catalyses phosphate(out) + ATP + H2O = ADP + 2 phosphate(in) + H(+). Part of the ABC transporter complex PstSACB involved in phosphate import. Responsible for energy coupling to the transport system. The sequence is that of Phosphate import ATP-binding protein PstB from Syntrophus aciditrophicus (strain SB).